The following is a 395-amino-acid chain: Zinc-regulated GTPase metalloprotein activator 1B (395 aa).

The disordered stretch occupies residues 1-36 (MLPAVGSADEEEDPAEEDCPELVPMETTQSEEEEKS). Over residues 8–20 (ADEEEDPAEEDCP) the composition is skewed to acidic residues. The psi-PxLVp motif signature appears at 17–24 (EDCPELVP). 49–56 (GYLGAGKT) is a binding site for GTP. The Zn(2+) site is built by C107, C109, and C110. The short motif at 107-110 (CLCC) is the CXCC motif element. Residues 110-114 (CSVKD) and 203-206 (NKTD) each bind GTP. One can recognise a CobW C-terminal domain in the interval 274-377 (IVTITFEVPG…ILKQLFIATV (104 aa)).

It belongs to the SIMIBI class G3E GTPase family. ZNG1 subfamily.

The protein resides in the nucleus. It carries out the reaction GTP + H2O = GDP + phosphate + H(+). Functionally, zinc chaperone that directly transfers zinc cofactor to target metalloproteins, thereby activating them. Catalyzes zinc insertion into the active site of methionine aminopeptidase METAP1, which function to cleave the initiator methionine from polypeptides during or after protein translation. Mechanistically, the N-terminal psi-PxLVp motif binds to the C6H2-type zinc finger of inactive form of METAP1. After formation of the docked complex, zinc is transferred from the CXCC motif in the GTPase domain of ZNG1B to the zinc binding site in the peptidase domain of METAP1 in a process requiring GTP hydrolysis. GTP/GDP exchange is required for release of active METAP1. This Homo sapiens (Human) protein is Zinc-regulated GTPase metalloprotein activator 1B.